Consider the following 244-residue polypeptide: Ribonuclease PH (244 aa).

Residues arginine 90 and 128–130 each bind phosphate; that span reads GTR.

This sequence belongs to the RNase PH family. Homohexameric ring arranged as a trimer of dimers.

The enzyme catalyses tRNA(n+1) + phosphate = tRNA(n) + a ribonucleoside 5'-diphosphate. In terms of biological role, phosphorolytic 3'-5' exoribonuclease that plays an important role in tRNA 3'-end maturation. Removes nucleotide residues following the 3'-CCA terminus of tRNAs; can also add nucleotides to the ends of RNA molecules by using nucleoside diphosphates as substrates, but this may not be physiologically important. Probably plays a role in initiation of 16S rRNA degradation (leading to ribosome degradation) during starvation. This chain is Ribonuclease PH, found in Cutibacterium acnes (strain DSM 16379 / KPA171202) (Propionibacterium acnes).